The following is a 57-amino-acid chain: uncharacterized protein (57 aa).

Positions 26-57 are disordered; it reads VVSTRKRLKQNTNTPPHYDTSEDEDEDNYYNY. The segment covering 46 to 57 has biased composition (acidic residues); sequence SEDEDEDNYYNY.

This is an uncharacterized protein from Autographa californica nuclear polyhedrosis virus (AcMNPV).